The sequence spans 394 residues: 8-amino-7-oxononanoate synthase (394 aa).

Substrate is bound at residue arginine 21. Position 112–113 (112–113) interacts with pyridoxal 5'-phosphate; the sequence is GY. Histidine 137 contributes to the substrate binding site. Positions 183, 211, and 239 each coordinate pyridoxal 5'-phosphate. Residue lysine 242 is modified to N6-(pyridoxal phosphate)lysine. Residue threonine 358 coordinates substrate.

It belongs to the class-II pyridoxal-phosphate-dependent aminotransferase family. BioF subfamily. As to quaternary structure, homodimer. The cofactor is pyridoxal 5'-phosphate.

It carries out the reaction 6-carboxyhexanoyl-[ACP] + L-alanine + H(+) = (8S)-8-amino-7-oxononanoate + holo-[ACP] + CO2. The protein operates within cofactor biosynthesis; biotin biosynthesis. Catalyzes the decarboxylative condensation of pimeloyl-[acyl-carrier protein] and L-alanine to produce 8-amino-7-oxononanoate (AON), [acyl-carrier protein], and carbon dioxide. In Burkholderia pseudomallei (strain 1710b), this protein is 8-amino-7-oxononanoate synthase.